A 144-amino-acid chain; its full sequence is Cysteine desulfuration protein SufE (144 aa).

C51 functions as the Cysteine persulfide intermediate in the catalytic mechanism.

It belongs to the SufE family. Homodimer. Interacts with SufS.

The protein localises to the cytoplasm. Its pathway is cofactor biosynthesis; iron-sulfur cluster biosynthesis. Its function is as follows. Participates in cysteine desulfuration mediated by SufS. Cysteine desulfuration mobilizes sulfur from L-cysteine to yield L-alanine and constitutes an essential step in sulfur metabolism for biosynthesis of a variety of sulfur-containing biomolecules. Functions as a sulfur acceptor for SufS, by mediating the direct transfer of the sulfur atom from the S-sulfanylcysteine of SufS, an intermediate product of cysteine desulfuration process. The chain is Cysteine desulfuration protein SufE from Wigglesworthia glossinidia brevipalpis.